The following is a 647-amino-acid chain: Beta-glucosidase-like SFR2, chloroplastic (647 aa).

The segment at 116 to 140 (SAAGDGGSQQSWRSTGGENIGDREQ) is disordered. A compositionally biased stretch (polar residues) spans 123–132 (SQQSWRSTGG). A glycan (N-linked (GlcNAc...) asparagine) is linked at N169. A beta-D-glucoside is bound by residues H258, 302 to 303 (NE), Y414, E466, W504, 511 to 512 (EW), and F520. E303 functions as the Proton donor in the catalytic mechanism. E466 acts as the Nucleophile in catalysis.

Belongs to the glycosyl hydrolase 1 family.

It is found in the plastid. The protein resides in the chloroplast outer membrane. It carries out the reaction 2 a 1,2-diacyl-3-O-(beta-D-galactosyl)-sn-glycerol = a 1,2-diacyl-3-O-[beta-D-galactosyl-(1-&gt;6)-beta-D-galactosyl]-sn-glycerol + a 1,2-diacyl-sn-glycerol. Functionally, galactosyltransferase synthesizing digalactosyldiacylglycerol from monogalactosyldiacylglycerol in the absence of UDP-galactose. Potentially involved in freezing tolerance. The protein is Beta-glucosidase-like SFR2, chloroplastic of Oryza sativa subsp. japonica (Rice).